We begin with the raw amino-acid sequence, 28 residues long: VGCEECPMHCKGKHAVPTCDDGVCNCNV.

Disulfide bonds link cysteine 3/cysteine 19, cysteine 6/cysteine 24, and cysteine 10/cysteine 26. At valine 28 the chain carries Valine amide.

As to expression, expressed by the venom gland.

Its subcellular location is the secreted. In terms of biological role, blocks voltage-gated potassium channels Kv1.1/KCNA1 (IC(50)=145 nM), Kv1.2/KCNA2 (IC(50)=2.5 nM), and Kv1.3/KCNA3 (IC(50)=15). Also inhibits calcium-activated potassium channels (KCa/KCNN). The polypeptide is Potassium channel toxin alpha-KTx 9.5 (Buthus occitanus tunetanus (Common European scorpion)).